Reading from the N-terminus, the 55-residue chain is uncharacterized protein (55 aa).

2 helical membrane passes run 5–25 and 26–46; these read LISI…MMHM and LPLY…LYRL.

The protein resides in the cell membrane. This is an uncharacterized protein from Bacillus subtilis (strain 168).